An 82-amino-acid chain; its full sequence is Myrmicitoxin(1)-Pm3a (82 aa).

The first 23 residues, 1–23, serve as a signal peptide directing secretion; that stretch reads MEIPKLLYIAVIAIGLSGSLTCA. Positions 24 to 59 are excised as a propeptide; it reads TPLANPLADPEAEAEAKATAEATAEAIAEALAEPEP. Position 81 is a leucine amide (Leu81).

Belongs to the formicidae venom clade 1 family. As to expression, expressed by the venom gland.

Its subcellular location is the secreted. In terms of biological role, toxin that causes a slowly developing temporary paralysis when intrathoracically injected into insects (blowflies). Does not cause spontaneous nocifensive behaviors by intraplantar injection in mice. The polypeptide is Myrmicitoxin(1)-Pm3a (Pogonomyrmex maricopa (Maricopa harvester ant)).